The chain runs to 370 residues: Protein STRICTOSIDINE SYNTHASE-LIKE 9 (370 aa).

A signal peptide spans methionine 1–glutamine 26. N-linked (GlcNAc...) asparagine glycosylation is found at asparagine 97 and asparagine 171.

The protein belongs to the strictosidine synthase family.

Its subcellular location is the vacuole. The polypeptide is Protein STRICTOSIDINE SYNTHASE-LIKE 9 (Arabidopsis thaliana (Mouse-ear cress)).